The following is a 469-amino-acid chain: MIPVSGFEGRTVAVFGLARTGLAAARALVAGGAKVALWDDKPAAREAAQAEGFELTDLTRADWREFAAVMLSPGVPLTHPAPHWTVERAREAGAEIVGDIELFARTVNAAPEHKRPKIVAITGTNGKSTTTALIGHICAEAGRDVRIGGNIGYGVLGLEDMHGGAVYVLELSSYQLDLTSSLHADVTVILNISPDHLERHGTMDEYVAAKRRILLNQGKGDTAVIGVDDPWGQRICTEITAANRRTIVPVSASKAMSRGVYALDGLLYDATGERAQEVADLKRARSLPGRHNWQNAAAAYAAARGLGISGEEAAQHLMTFPGLAHRMETVAVLGKVRFVNDSKATNADAARQAMSSYPKFYWIAGGLPKTGGIDGLIDLFPRIEKAYLVGEAAPAFADVLRGKAPAVESGTIEAAVRQAYADARAAGQEAIVLLSPACASFDQFADFEERGEAFRAAVQKLADGQADAA.

Position 123 to 129 (123 to 129) interacts with ATP; that stretch reads GTNGKST.

Belongs to the MurCDEF family.

The protein resides in the cytoplasm. The catalysed reaction is UDP-N-acetyl-alpha-D-muramoyl-L-alanine + D-glutamate + ATP = UDP-N-acetyl-alpha-D-muramoyl-L-alanyl-D-glutamate + ADP + phosphate + H(+). The protein operates within cell wall biogenesis; peptidoglycan biosynthesis. In terms of biological role, cell wall formation. Catalyzes the addition of glutamate to the nucleotide precursor UDP-N-acetylmuramoyl-L-alanine (UMA). This chain is UDP-N-acetylmuramoylalanine--D-glutamate ligase, found in Phenylobacterium zucineum (strain HLK1).